We begin with the raw amino-acid sequence, 90 residues long: NELL2-interacting cell ontogeny regulator 1 (90 aa).

Residues 1-26 form the signal peptide; the sequence is MVSSGYLQAVMLLLAVQLLCFRPSDA.

Belongs to the NICOL family.

The protein localises to the secreted. Its function is as follows. mRNA-binding protein which interacts with a range of target mRNAs and may promote extracellular matrix production. The chain is NELL2-interacting cell ontogeny regulator 1 from Salmo salar (Atlantic salmon).